The sequence spans 306 residues: Ornithine carbamoyltransferase, anabolic (306 aa).

Carbamoyl phosphate contacts are provided by residues 46-49 (STRT), glutamine 73, arginine 97, and 124-127 (HPTQ). L-ornithine is bound by residues asparagine 156, aspartate 220, and 224–225 (SM). Carbamoyl phosphate contacts are provided by residues 260–261 (CL) and arginine 288.

This sequence belongs to the aspartate/ornithine carbamoyltransferase superfamily. OTCase family. Homohexamer; dimer of trimers.

Its subcellular location is the cytoplasm. It catalyses the reaction carbamoyl phosphate + L-ornithine = L-citrulline + phosphate + H(+). Its pathway is amino-acid biosynthesis; L-arginine biosynthesis; L-arginine from L-ornithine and carbamoyl phosphate: step 1/3. Its function is as follows. Reversibly catalyzes the transfer of the carbamoyl group from carbamoyl phosphate (CP) to the N(epsilon) atom of ornithine (ORN) to produce L-citrulline, which is a substrate for argininosuccinate synthetase (ArgG) involved in the final step in arginine biosynthesis. The sequence is that of Ornithine carbamoyltransferase, anabolic from Campylobacter jejuni subsp. jejuni serotype O:2 (strain ATCC 700819 / NCTC 11168).